The chain runs to 335 residues: Cobalt-precorrin-5B C(1)-methyltransferase (335 aa).

This sequence belongs to the CbiD family.

It catalyses the reaction Co-precorrin-5B + S-adenosyl-L-methionine = Co-precorrin-6A + S-adenosyl-L-homocysteine. It participates in cofactor biosynthesis; adenosylcobalamin biosynthesis; cob(II)yrinate a,c-diamide from sirohydrochlorin (anaerobic route): step 6/10. In terms of biological role, catalyzes the methylation of C-1 in cobalt-precorrin-5B to form cobalt-precorrin-6A. The chain is Cobalt-precorrin-5B C(1)-methyltransferase from Methanospirillum hungatei JF-1 (strain ATCC 27890 / DSM 864 / NBRC 100397 / JF-1).